The sequence spans 396 residues: 1-deoxy-D-xylulose 5-phosphate reductoisomerase (396 aa).

The NADPH site is built by T10, G11, S12, I13, N38, and N123. K124 provides a ligand contact to 1-deoxy-D-xylulose 5-phosphate. E125 contributes to the NADPH binding site. A Mn(2+)-binding site is contributed by D149. 1-deoxy-D-xylulose 5-phosphate contacts are provided by S150, E151, S185, and H208. Residue E151 participates in Mn(2+) binding. G214 is an NADPH binding site. Residues S221, N226, K227, and E230 each coordinate 1-deoxy-D-xylulose 5-phosphate. E230 contributes to the Mn(2+) binding site.

Belongs to the DXR family. Mg(2+) serves as cofactor. Mn(2+) is required as a cofactor.

The catalysed reaction is 2-C-methyl-D-erythritol 4-phosphate + NADP(+) = 1-deoxy-D-xylulose 5-phosphate + NADPH + H(+). It functions in the pathway isoprenoid biosynthesis; isopentenyl diphosphate biosynthesis via DXP pathway; isopentenyl diphosphate from 1-deoxy-D-xylulose 5-phosphate: step 1/6. Functionally, catalyzes the NADPH-dependent rearrangement and reduction of 1-deoxy-D-xylulose-5-phosphate (DXP) to 2-C-methyl-D-erythritol 4-phosphate (MEP). This is 1-deoxy-D-xylulose 5-phosphate reductoisomerase from Shewanella halifaxensis (strain HAW-EB4).